Here is a 387-residue protein sequence, read N- to C-terminus: Probable protein phosphatase 2C 25 (387 aa).

The 300-residue stretch at 52–351 folds into the PPM-type phosphatase domain; the sequence is EFSFAVVQAN…DDITVVVVYI (300 aa). Residues Asp83, Gly84, Asp283, and Asp342 each contribute to the Mn(2+) site.

This sequence belongs to the PP2C family. Mg(2+) is required as a cofactor. Mn(2+) serves as cofactor.

It catalyses the reaction O-phospho-L-seryl-[protein] + H2O = L-seryl-[protein] + phosphate. The enzyme catalyses O-phospho-L-threonyl-[protein] + H2O = L-threonyl-[protein] + phosphate. The sequence is that of Probable protein phosphatase 2C 25 from Oryza sativa subsp. japonica (Rice).